The following is a 625-amino-acid chain: Grainyhead-like protein 2 homolog (625 aa).

The tract at residues 1 to 93 (MSQESDNNKR…KASDSQEDQD (93 aa)) is transcription activation. Disordered stretches follow at residues 198 to 222 (ASHSSYLKDDQRSTPDSTYSESFKD) and 428 to 452 (EERKQNRKKGKGQASQAQCNNSSDG). Residues 244–482 (GSGTFQYTLE…DLHSQPVLFI (239 aa)) form the Grh/CP2 DB domain. Residues 440-451 (QASQAQCNNSSD) are compositionally biased toward polar residues.

Belongs to the grh/CP2 family. Grainyhead subfamily. As to quaternary structure, homodimer, also forms heterodimers with GRHL1 or GRHL3.

It localises to the nucleus. Its subcellular location is the membrane. Functionally, transcription factor playing an important role in primary neurulation and in epithelial development. Binds directly to the consensus DNA sequence 5'-AACCGGTT-3' acting as an activator and repressor on distinct target genes. During embryogenesis, plays unique and cooperative roles with GRHL3 in establishing distinct zones of primary neurulation. Essential for closure 3 (rostral end of the forebrain), functions cooperatively with GRHL3 in closure 2 (forebrain/midbrain boundary) and posterior neuropore closure. Regulates epithelial morphogenesis acting as a target gene-associated transcriptional activator of apical junctional complex components. Up-regulates of CLDN3 and CLDN4, as well as of RAB25, which increases the CLDN4 protein and its localization at tight junctions. Comprises an essential component of the transcriptional machinery that establishes appropriate expression levels of CLDN4 and CDH1 in different types of epithelia. Exhibits functional redundancy with GRHL3 in epidermal morphogenetic events such as eyelid fusion and epidermal wound repair. In lung, forms a regulatory loop with NKX2-1 that coordinates lung epithelial cell morphogenesis and differentiation. In keratinocytes, plays a role in telomerase activation during cellular proliferation, regulates TERT expression by binding to TERT promoter region and inhibiting DNA methylation at the 5'-CpG island, possibly by interfering with DNMT1 enzyme activity. In addition, impairs keratinocyte differentiation and epidermal function by inhibiting the expression of genes clustered at the epidermal differentiation complex (EDC) as well as GRHL1 and GRHL3 through epigenetic mechanisms. This Mus musculus (Mouse) protein is Grainyhead-like protein 2 homolog (Grhl2).